We begin with the raw amino-acid sequence, 318 residues long: tRNA uridine(34) hydroxylase (318 aa).

The Rhodanese domain occupies 123-217; it reads EDDDTVIIDA…YGKDPETKGQ (95 aa). Catalysis depends on Cys177, which acts as the Cysteine persulfide intermediate.

It belongs to the TrhO family.

The enzyme catalyses uridine(34) in tRNA + AH2 + O2 = 5-hydroxyuridine(34) in tRNA + A + H2O. In terms of biological role, catalyzes oxygen-dependent 5-hydroxyuridine (ho5U) modification at position 34 in tRNAs. The chain is tRNA uridine(34) hydroxylase from Staphylococcus aureus (strain MRSA252).